A 757-amino-acid polypeptide reads, in one-letter code: RNA-directed RNA polymerase catalytic subunit (757 aa).

The segment at 53-82 is disordered; it reads GRWTKNTETGAPQLNPIDGPLPKDNEPSGY. 2 short sequence motifs (nuclear localization signal) span residues 187-195 and 203-216; these read RKRRVRDNV and RTIG…NKRS. The interval 249 to 256 is promoter-binding site; that stretch reads RGFVYFVE. In terms of domain architecture, RdRp catalytic spans 286–483; it reads VRKMMTNSQD…GINMSKKKSY (198 aa).

This sequence belongs to the influenza viruses polymerase PB1 family. As to quaternary structure, influenza RNA polymerase is composed of three subunits: PB1, PB2 and PA. Interacts (via N-terminus) with PA (via C-terminus). Interacts (via C-terminus) with PB2 (via N-terminus); this interaction is essential for transcription initiation. Interacts (via C-terminus) with human PKP2 (via N-terminus); the interaction competitively inhibits the interaction between the RNA polymerase subunits PB1 and PB2. Post-translationally, phosphorylated by host PRKCA.

The protein resides in the host nucleus. It localises to the host cytoplasm. It carries out the reaction RNA(n) + a ribonucleoside 5'-triphosphate = RNA(n+1) + diphosphate. RNA-dependent RNA polymerase which is responsible for replication and transcription of virus RNA segments. The transcription of viral mRNAs occurs by a unique mechanism called cap-snatching. 5' methylated caps of cellular mRNAs are cleaved after 10-13 nucleotides by PA. In turn, these short capped RNAs are used as primers by PB1 for transcription of viral mRNAs. During virus replication, PB1 initiates RNA synthesis and copy vRNA into complementary RNA (cRNA) which in turn serves as a template for the production of more vRNAs. The polypeptide is RNA-directed RNA polymerase catalytic subunit (Influenza A virus (strain A/Brazil/11/1978 H1N1)).